A 244-amino-acid polypeptide reads, in one-letter code: Small ribosomal subunit protein uS2 (244 aa).

It belongs to the universal ribosomal protein uS2 family.

The sequence is that of Small ribosomal subunit protein uS2 from Exiguobacterium sibiricum (strain DSM 17290 / CCUG 55495 / CIP 109462 / JCM 13490 / 255-15).